A 133-amino-acid chain; its full sequence is Putative esterase TV1331 (133 aa).

The protein belongs to the thioesterase PaaI family.

In Thermoplasma volcanium (strain ATCC 51530 / DSM 4299 / JCM 9571 / NBRC 15438 / GSS1), this protein is Putative esterase TV1331.